A 163-amino-acid chain; its full sequence is Nucleotide-binding protein APL_1231 (163 aa).

It belongs to the YajQ family.

Nucleotide-binding protein. This is Nucleotide-binding protein APL_1231 from Actinobacillus pleuropneumoniae serotype 5b (strain L20).